We begin with the raw amino-acid sequence, 282 residues long: ADP-ribosyl cyclase/cyclic ADP-ribose hydrolase (282 aa).

Residues 1–24 form the signal peptide; sequence MSPVAIVACVCLAVTLTRISPSEA. Cystine bridges form between Cys-39/Cys-58, Cys-75/Cys-155, Cys-136/Cys-149, Cys-230/Cys-251, and Cys-263/Cys-272.

This sequence belongs to the ADP-ribosyl cyclase family. Ovotestis.

The protein localises to the cytoplasmic vesicle. It carries out the reaction NAD(+) = cyclic ADP-beta-D-ribose + nicotinamide + H(+). The enzyme catalyses NAD(+) + H2O = ADP-D-ribose + nicotinamide + H(+). The catalysed reaction is nicotinate + NADP(+) = nicotinate-adenine dinucleotide phosphate + nicotinamide. With respect to regulation, activity is presumably regulated by its sequestration in vesicles before egg fertilization. After fertilization and upon NADase release, it could then be regulated via its potential phosphorylation sites. Functionally, synthesizes cyclic ADP-ribose (cADPR), a second messenger for calcium mobilization from endoplasmic reticulum. Might make the Ca(2+) mobilizer nicotinate-adenine dinucleotide phosphate. Does not have cADPR hydrolase activity. The chain is ADP-ribosyl cyclase/cyclic ADP-ribose hydrolase from Aplysia kurodai (Kuroda's sea hare).